Reading from the N-terminus, the 281-residue chain is Bifunctional protein FolD (281 aa).

NADP(+) is bound by residues 165-167 (GRG), Thr-192, and Val-233.

This sequence belongs to the tetrahydrofolate dehydrogenase/cyclohydrolase family. As to quaternary structure, homodimer.

The enzyme catalyses (6R)-5,10-methylene-5,6,7,8-tetrahydrofolate + NADP(+) = (6R)-5,10-methenyltetrahydrofolate + NADPH. The catalysed reaction is (6R)-5,10-methenyltetrahydrofolate + H2O = (6R)-10-formyltetrahydrofolate + H(+). The protein operates within one-carbon metabolism; tetrahydrofolate interconversion. Functionally, catalyzes the oxidation of 5,10-methylenetetrahydrofolate to 5,10-methenyltetrahydrofolate and then the hydrolysis of 5,10-methenyltetrahydrofolate to 10-formyltetrahydrofolate. This chain is Bifunctional protein FolD, found in Mycobacterium avium (strain 104).